Consider the following 217-residue polypeptide: 3,4-dihydroxy-2-butanone 4-phosphate synthase (217 aa).

D-ribulose 5-phosphate contacts are provided by residues Arg37 to Glu38, Asp42, Arg150 to Thr154, and Glu174. Glu38 lines the Mg(2+) pocket. His153 provides a ligand contact to Mg(2+).

This sequence belongs to the DHBP synthase family. In terms of assembly, homodimer. Mg(2+) is required as a cofactor. Mn(2+) serves as cofactor.

The enzyme catalyses D-ribulose 5-phosphate = (2S)-2-hydroxy-3-oxobutyl phosphate + formate + H(+). The protein operates within cofactor biosynthesis; riboflavin biosynthesis; 2-hydroxy-3-oxobutyl phosphate from D-ribulose 5-phosphate: step 1/1. In terms of biological role, catalyzes the conversion of D-ribulose 5-phosphate to formate and 3,4-dihydroxy-2-butanone 4-phosphate. This is 3,4-dihydroxy-2-butanone 4-phosphate synthase from Shewanella baltica (strain OS155 / ATCC BAA-1091).